Consider the following 547-residue polypeptide: Chaperonin GroEL (547 aa).

Residues Thr-30–Pro-33, Lys-51, Asp-87–Thr-91, Gly-415, and Asp-496 each bind ATP. Positions Lys-528–Met-547 are disordered. Positions Ala-531–Met-547 are enriched in gly residues.

This sequence belongs to the chaperonin (HSP60) family. As to quaternary structure, forms a cylinder of 14 subunits composed of two heptameric rings stacked back-to-back. Interacts with the co-chaperonin GroES.

Its subcellular location is the cytoplasm. The enzyme catalyses ATP + H2O + a folded polypeptide = ADP + phosphate + an unfolded polypeptide.. In terms of biological role, together with its co-chaperonin GroES, plays an essential role in assisting protein folding. The GroEL-GroES system forms a nano-cage that allows encapsulation of the non-native substrate proteins and provides a physical environment optimized to promote and accelerate protein folding. The sequence is that of Chaperonin GroEL from Dinoroseobacter shibae (strain DSM 16493 / NCIMB 14021 / DFL 12).